The following is a 417-amino-acid chain: D-amino acid dehydrogenase (417 aa).

Residue 3–17 participates in FAD binding; the sequence is IVVLGGGVVGVTSAW.

It belongs to the DadA oxidoreductase family. FAD serves as cofactor.

The catalysed reaction is a D-alpha-amino acid + A + H2O = a 2-oxocarboxylate + AH2 + NH4(+). It functions in the pathway amino-acid degradation; D-alanine degradation; NH(3) and pyruvate from D-alanine: step 1/1. Its function is as follows. Oxidative deamination of D-amino acids. The sequence is that of D-amino acid dehydrogenase from Aeromonas salmonicida (strain A449).